The chain runs to 563 residues: Putative inactive polypeptide N-acetylgalactosaminyltransferase 12 (563 aa).

Over 1-6 (MEVFAS) the chain is Cytoplasmic. A helical; Signal-anchor for type II membrane protein transmembrane segment spans residues 7 to 29 (VLNCCFKYIVLPVWIFIVLLLLH). At 30-563 (RDLSSWDGLM…SVMQSANILV (534 aa)) the chain is on the lumenal side. A glycan (N-linked (GlcNAc...) asparagine) is linked at asparagine 50. Cysteines 97 and 334 form a disulfide. The interval 109–225 (MKPASIIMIF…NGWLSPLLDT (117 aa)) is catalytic subdomain A. The tract at residues 280–342 (PYEVAAVRTS…PCSRVGHLQP (63 aa)) is catalytic subdomain B. 2 N-linked (GlcNAc...) asparagine glycosylation sites follow: asparagine 389 and asparagine 428. The Ricin B-type lectin domain maps to 433–549 (ASGHVKTLEF…ANGKQRWILD (117 aa)). A disulfide bridge links cysteine 446 with cysteine 461. Residues asparagine 464 and asparagine 469 are each glycosylated (N-linked (GlcNAc...) asparagine). 2 disulfide bridges follow: cysteine 485-cysteine 499 and cysteine 523-cysteine 537. Asparagine 552 is a glycosylation site (N-linked (GlcNAc...) asparagine).

Belongs to the glycosyltransferase 2 family. GalNAc-T subfamily.

It is found in the golgi apparatus membrane. Probable inactive glycosyltransferase. The protein is Putative inactive polypeptide N-acetylgalactosaminyltransferase 12 (pgant12) of Drosophila melanogaster (Fruit fly).